Here is a 230-residue protein sequence, read N- to C-terminus: Cytidylate kinase (230 aa).

12 to 20 is a binding site for ATP; sequence GPSGAGKGT.

Belongs to the cytidylate kinase family. Type 1 subfamily.

The protein resides in the cytoplasm. It catalyses the reaction CMP + ATP = CDP + ADP. The enzyme catalyses dCMP + ATP = dCDP + ADP. This chain is Cytidylate kinase, found in Shewanella oneidensis (strain ATCC 700550 / JCM 31522 / CIP 106686 / LMG 19005 / NCIMB 14063 / MR-1).